The primary structure comprises 123 residues: Small ribosomal subunit protein uS12 (123 aa).

Aspartate 89 is subject to 3-methylthioaspartic acid.

This sequence belongs to the universal ribosomal protein uS12 family. In terms of assembly, part of the 30S ribosomal subunit. Contacts proteins S8 and S17. May interact with IF1 in the 30S initiation complex.

In terms of biological role, with S4 and S5 plays an important role in translational accuracy. Interacts with and stabilizes bases of the 16S rRNA that are involved in tRNA selection in the A site and with the mRNA backbone. Located at the interface of the 30S and 50S subunits, it traverses the body of the 30S subunit contacting proteins on the other side and probably holding the rRNA structure together. The combined cluster of proteins S8, S12 and S17 appears to hold together the shoulder and platform of the 30S subunit. The protein is Small ribosomal subunit protein uS12 of Brucella anthropi (strain ATCC 49188 / DSM 6882 / CCUG 24695 / JCM 21032 / LMG 3331 / NBRC 15819 / NCTC 12168 / Alc 37) (Ochrobactrum anthropi).